The sequence spans 112 residues: MADVSLKLSAKDIYEKDFEKTMARGYRREEVDAFLDDIITDYQKMADMNNEVVKLSEENNKLKKEVEELRLRVATSRPSDNKSFSSNNSSSSNNNVDILKRISNLEKAVFGK.

Positions 42 to 77 (YQKMADMNNEVVKLSEENNKLKKEVEELRLRVATSR) form a coiled coil. The interval 75 to 97 (TSRPSDNKSFSSNNSSSSNNNVD) is disordered. The span at 81–95 (NKSFSSNNSSSSNNN) shows a compositional bias: low complexity.

This sequence belongs to the GpsB family. In terms of assembly, forms polymers through the coiled coil domains. Interacts with PBP1, MreC and EzrA.

Its subcellular location is the cytoplasm. Its function is as follows. Divisome component that associates with the complex late in its assembly, after the Z-ring is formed, and is dependent on DivIC and PBP2B for its recruitment to the divisome. Together with EzrA, is a key component of the system that regulates PBP1 localization during cell cycle progression. Its main role could be the removal of PBP1 from the cell pole after pole maturation is completed. Also contributes to the recruitment of PBP1 to the division complex. Not essential for septum formation. This is Cell cycle protein GpsB from Staphylococcus haemolyticus (strain JCSC1435).